A 41-amino-acid chain; its full sequence is DDGVEMTEEEVKRGIMDTVKNAAKDLAGQLLDKLKCKITAC.

Positions 1-11 (DDGVEMTEEEV) are excised as a propeptide. A disulfide bond links C36 and C41.

This sequence belongs to the frog skin active peptide (FSAP) family. Ranatuerin subfamily.

The protein resides in the secreted. In terms of biological role, antimicrobial peptide. This chain is Ranatuerin-2PLg, found in Lithobates palustris (Pickerel frog).